The following is a 38-amino-acid chain: Phospholipase A2 1 (38 aa).

Positions 28, 30, and 32 each coordinate Ca(2+).

It belongs to the phospholipase A2 family. Group I subfamily. Ca(2+) is required as a cofactor. As to expression, expressed by the venom gland.

The protein localises to the secreted. The enzyme catalyses a 1,2-diacyl-sn-glycero-3-phosphocholine + H2O = a 1-acyl-sn-glycero-3-phosphocholine + a fatty acid + H(+). In terms of biological role, snake venom phospholipase A2 (PLA2) that inhibits neuromuscular transmission by blocking acetylcholine release from the nerve termini. PLA2 catalyzes the calcium-dependent hydrolysis of the 2-acyl groups in 3-sn-phosphoglycerides. In Calliophis bivirgatus (Blue Malaysian coral snake), this protein is Phospholipase A2 1.